We begin with the raw amino-acid sequence, 357 residues long: 4-hydroxy-3-methylbut-2-en-1-yl diphosphate synthase (flavodoxin) (357 aa).

Residues Cys264, Cys267, Cys299, and Glu306 each coordinate [4Fe-4S] cluster.

The protein belongs to the IspG family. [4Fe-4S] cluster is required as a cofactor.

It carries out the reaction (2E)-4-hydroxy-3-methylbut-2-enyl diphosphate + oxidized [flavodoxin] + H2O + 2 H(+) = 2-C-methyl-D-erythritol 2,4-cyclic diphosphate + reduced [flavodoxin]. It participates in isoprenoid biosynthesis; isopentenyl diphosphate biosynthesis via DXP pathway; isopentenyl diphosphate from 1-deoxy-D-xylulose 5-phosphate: step 5/6. Functionally, converts 2C-methyl-D-erythritol 2,4-cyclodiphosphate (ME-2,4cPP) into 1-hydroxy-2-methyl-2-(E)-butenyl 4-diphosphate. This is 4-hydroxy-3-methylbut-2-en-1-yl diphosphate synthase (flavodoxin) from Campylobacter jejuni subsp. jejuni serotype O:2 (strain ATCC 700819 / NCTC 11168).